A 1410-amino-acid polypeptide reads, in one-letter code: DNA-directed RNA polymerase subunit beta' (1410 aa).

Zn(2+)-binding residues include Cys70, Cys72, Cys85, and Cys88. Residues Asp460, Asp462, and Asp464 each contribute to the Mg(2+) site. Residues Cys814, Cys888, Cys895, and Cys898 each contribute to the Zn(2+) site.

It belongs to the RNA polymerase beta' chain family. The RNAP catalytic core consists of 2 alpha, 1 beta, 1 beta' and 1 omega subunit. When a sigma factor is associated with the core the holoenzyme is formed, which can initiate transcription. Mg(2+) serves as cofactor. It depends on Zn(2+) as a cofactor.

The catalysed reaction is RNA(n) + a ribonucleoside 5'-triphosphate = RNA(n+1) + diphosphate. In terms of biological role, DNA-dependent RNA polymerase catalyzes the transcription of DNA into RNA using the four ribonucleoside triphosphates as substrates. This is DNA-directed RNA polymerase subunit beta' from Shewanella denitrificans (strain OS217 / ATCC BAA-1090 / DSM 15013).